The chain runs to 476 residues: Bifunctional protein HldE (476 aa).

The ribokinase stretch occupies residues 1-318 (MKVTLPDFRR…ENAIRGRAET (318 aa)). Residue 195-198 (NLSE) coordinates ATP. The active site involves aspartate 264. A cytidylyltransferase region spans residues 344–476 (MTNGIFDILH…IIQSIKNGRG (133 aa)).

The protein in the N-terminal section; belongs to the carbohydrate kinase PfkB family. This sequence in the C-terminal section; belongs to the cytidylyltransferase family. As to quaternary structure, homodimer.

The catalysed reaction is D-glycero-beta-D-manno-heptose 7-phosphate + ATP = D-glycero-beta-D-manno-heptose 1,7-bisphosphate + ADP + H(+). It catalyses the reaction D-glycero-beta-D-manno-heptose 1-phosphate + ATP + H(+) = ADP-D-glycero-beta-D-manno-heptose + diphosphate. It functions in the pathway nucleotide-sugar biosynthesis; ADP-L-glycero-beta-D-manno-heptose biosynthesis; ADP-L-glycero-beta-D-manno-heptose from D-glycero-beta-D-manno-heptose 7-phosphate: step 1/4. The protein operates within nucleotide-sugar biosynthesis; ADP-L-glycero-beta-D-manno-heptose biosynthesis; ADP-L-glycero-beta-D-manno-heptose from D-glycero-beta-D-manno-heptose 7-phosphate: step 3/4. Functionally, catalyzes the phosphorylation of D-glycero-D-manno-heptose 7-phosphate at the C-1 position to selectively form D-glycero-beta-D-manno-heptose-1,7-bisphosphate. Catalyzes the ADP transfer from ATP to D-glycero-beta-D-manno-heptose 1-phosphate, yielding ADP-D-glycero-beta-D-manno-heptose. In Yersinia pseudotuberculosis serotype O:1b (strain IP 31758), this protein is Bifunctional protein HldE.